The following is a 291-amino-acid chain: Quinol oxidase subunit 2 (291 aa).

A signal peptide spans 1–28; it reads MQLKKAFWKLASLLPLSLLLFLGGCDKK. Helical transmembrane passes span 49 to 69 and 91 to 111; these read SFLLMSLIIAIVFILFTVILI and LEIIWTLVPVIIVIALSIPTV.

It belongs to the cytochrome c oxidase subunit 2 family.

The protein localises to the cell membrane. The catalysed reaction is 2 a quinol + O2 = 2 a quinone + 2 H2O. Functionally, catalyzes quinol oxidation with the concomitant reduction of oxygen to water. Subunit II transfers the electrons from a quinol to the binuclear center of the catalytic subunit I. The sequence is that of Quinol oxidase subunit 2 from Bacillus anthracis.